The sequence spans 351 residues: Soluble interferon alpha/beta receptor OPG204 (351 aa).

The first 19 residues, 1–19 (MTMKMMVHIYFVSLLLLLF), serve as a signal peptide directing secretion. 2 Ig-like C2-type domains span residues 65 to 147 (LGEP…RSHI) and 155 to 237 (PKTY…IVVS). 2 cysteine pairs are disulfide-bonded: Cys-73-Cys-129 and Cys-172-Cys-221. N-linked (GlcNAc...) asparagine; by host glycosylation is found at Asn-117, Asn-182, Asn-261, Asn-269, and Asn-321. An Ig-like V-type domain is found at 246–345 (PSQDHRFKLI…HNYYFEKTLT (100 aa)). Cys-272 and Cys-333 form a disulfide bridge.

Belongs to the interleukin-1 receptor family. Interacts with host IFNA1.

It localises to the secreted. Functionally, counteracts the antiviral effects of host IFN-alpha/beta and key IFN-inducible proteins involved in viral RNA degradation suxh as host OAS1. Acts as a soluble IFN-alpha receptor and thus inhibits the interaction between host IFN-alpha and its receptor. This chain is Soluble interferon alpha/beta receptor OPG204 (OPG204), found in Vaccinia virus (strain Western Reserve) (VACV).